A 38-amino-acid chain; its full sequence is DNA binding protein ORF8 (38 aa).

The protein belongs to the microviridae J protein family.

It localises to the virion. Its subcellular location is the host cytoplasm. In terms of biological role, mediates ssDNA packaging into virion, it locates to the internal surface of the capsid, thereby displacing the internal scaffolding protein during virion formation. Additionally, protein ORF8 plays a role in viral attachment to the host cell. In Spiroplasma melliferum (SpV4), this protein is DNA binding protein ORF8.